The following is a 353-amino-acid chain: MSKPPDLLLRLLRGAPRQRVCTLFIIGFKFTFFVSIMIYWHVVGEPKEKGQLYNLPAEIPCPTLTPPTPPSHGPTPGNIFFLETSDRTNPNFLFMCSVESAARTHPESHVLVLMKGLPGGNASLPRHLGISLLSCFPNVQMLPLDLRELFQDTPLADWYAAVQGRWEPYLLPVLSDASRIALMWKFGGIYLDTDFIVLKNLRNLTNVLGTQSRYVLNGAFLAFERRHEFMALCMRDFVDHYNGWIWGHQGPQLLTRVFKKWCSIRSLAESRSCRGVTTLPPEAFYPIPWQDWKKYFEDINPEELPRLLSATYAVHVWNKKSQGTRFEATSRALLAQLHARYCPTTHEAMKMYL.

The Cytoplasmic segment spans residues 1–22 (MSKPPDLLLRLLRGAPRQRVCT). The chain crosses the membrane as a helical; Signal-anchor for type II membrane protein span at residues 23 to 43 (LFIIGFKFTFFVSIMIYWHVV). The Lumenal portion of the chain corresponds to 44–353 (GEPKEKGQLY…TTHEAMKMYL (310 aa)). N121 carries N-linked (GlcNAc...) asparagine glycosylation. A DXD motif motif is present at residues 192-194 (DTD). N-linked (GlcNAc...) asparagine glycosylation is present at N203.

It belongs to the glycosyltransferase 32 family.

Its subcellular location is the golgi apparatus membrane. It catalyses the reaction a beta-D-Gal-(1-&gt;4)-beta-D-Glc-(1&lt;-&gt;1)-Cer(d18:1(4E)) + UDP-alpha-D-galactose = a globoside Gb3Cer (d18:1(4E)) + UDP + H(+). The enzyme catalyses a beta-D-Gal-(1&lt;-&gt;1')-ceramide + UDP-alpha-D-galactose = alpha-D-Gal-(1-&gt;4)-beta-D-Gal-(1&lt;-&gt;1')-Cer + UDP + H(+). It participates in glycolipid biosynthesis. Its function is as follows. Catalyzes the transfer of galactose from UDP-alpha-D-galactose to lactosylceramide/beta-D-galactosyl-(1-&gt;4)-beta-D-glucosyl-(1&lt;-&gt;1)-ceramide(d18:1(4E)) to produce globotriaosylceramide/globoside Gb3Cer (d18:1(4E)). Also able to transfer galactose to galactosylceramide/beta-D-Gal-(1&lt;-&gt;1')-Cer. Globoside Gb3Cer is a glycosphingolipid of the globo serie, one of the major types of neutral root structures of glycosphingolipids, that constitute a significant portion of mammalian cell membranes. The chain is Lactosylceramide 4-alpha-galactosyltransferase (A4GALT) from Pan troglodytes (Chimpanzee).